The sequence spans 26 residues: Acetylcholine receptor subunit delta (26 aa).

This sequence belongs to the ligand-gated ion channel (TC 1.A.9) family. Acetylcholine receptor (TC 1.A.9.1) subfamily. In terms of assembly, pentamer of two alpha chains, and one each of the beta, delta, and gamma chains.

The protein resides in the postsynaptic cell membrane. It localises to the cell membrane. It catalyses the reaction K(+)(in) = K(+)(out). The catalysed reaction is Na(+)(in) = Na(+)(out). Functionally, after binding acetylcholine, the AChR responds by an extensive change in conformation that affects all subunits and leads to opening of an ion-conducting channel across the plasma membrane. In Electrophorus electricus (Electric eel), this protein is Acetylcholine receptor subunit delta (chrnd).